We begin with the raw amino-acid sequence, 484 residues long: ATP synthase subunit beta (484 aa).

162–169 serves as a coordination point for ATP; it reads GGAGVGKT.

This sequence belongs to the ATPase alpha/beta chains family. F-type ATPases have 2 components, CF(1) - the catalytic core - and CF(0) - the membrane proton channel. CF(1) has five subunits: alpha(3), beta(3), gamma(1), delta(1), epsilon(1). CF(0) has three main subunits: a(1), b(2) and c(9-12). The alpha and beta chains form an alternating ring which encloses part of the gamma chain. CF(1) is attached to CF(0) by a central stalk formed by the gamma and epsilon chains, while a peripheral stalk is formed by the delta and b chains.

Its subcellular location is the cell inner membrane. It carries out the reaction ATP + H2O + 4 H(+)(in) = ADP + phosphate + 5 H(+)(out). Functionally, produces ATP from ADP in the presence of a proton gradient across the membrane. The catalytic sites are hosted primarily by the beta subunits. The polypeptide is ATP synthase subunit beta (Agrobacterium fabrum (strain C58 / ATCC 33970) (Agrobacterium tumefaciens (strain C58))).